The chain runs to 428 residues: tRNA modification GTPase MnmE (428 aa).

Arg20, Glu76, and Arg116 together coordinate (6S)-5-formyl-5,6,7,8-tetrahydrofolate. The TrmE-type G domain maps to 212-351; it reads GFEVAIVGAP…LVAAIGERLL (140 aa). Asn222 provides a ligand contact to K(+). Residues 222 to 227, 241 to 247, and 266 to 269 contribute to the GTP site; these read NAGKST, SEIAGTT, and DTAG. Ser226 contacts Mg(2+). Ser241, Ile243, and Thr246 together coordinate K(+). Thr247 lines the Mg(2+) pocket. Lys428 contributes to the (6S)-5-formyl-5,6,7,8-tetrahydrofolate binding site.

Belongs to the TRAFAC class TrmE-Era-EngA-EngB-Septin-like GTPase superfamily. TrmE GTPase family. As to quaternary structure, homodimer. Heterotetramer of two MnmE and two MnmG subunits. K(+) serves as cofactor.

The protein localises to the cytoplasm. Its function is as follows. Exhibits a very high intrinsic GTPase hydrolysis rate. Involved in the addition of a carboxymethylaminomethyl (cmnm) group at the wobble position (U34) of certain tRNAs, forming tRNA-cmnm(5)s(2)U34. This is tRNA modification GTPase MnmE from Cereibacter sphaeroides (strain ATCC 17029 / ATH 2.4.9) (Rhodobacter sphaeroides).